A 352-amino-acid polypeptide reads, in one-letter code: Selenide, water dikinase (352 aa).

Cysteine 23 is a catalytic residue. Residues lysine 26 and 54-56 each bind ATP; that span reads SRD. Aspartate 57 lines the Mg(2+) pocket. Residues aspartate 74, aspartate 97, and 145–147 each bind ATP; that span reads GHS. Residue aspartate 97 coordinates Mg(2+). Aspartate 233 is a Mg(2+) binding site.

Belongs to the selenophosphate synthase 1 family. Class I subfamily. Homodimer. It depends on Mg(2+) as a cofactor.

The enzyme catalyses hydrogenselenide + ATP + H2O = selenophosphate + AMP + phosphate + 2 H(+). Its function is as follows. Synthesizes selenophosphate from selenide and ATP. The chain is Selenide, water dikinase from Shewanella sp. (strain MR-4).